Consider the following 199-residue polypeptide: Ribonuclease P protein subunit p25 (199 aa).

The segment covering 1 to 11 (MENFRKVRSEE) has biased composition (basic and acidic residues). Disordered stretches follow at residues 1–31 (MENF…FADL) and 146–199 (PRQL…DRTA). Phosphoserine is present on Ser172. The span at 190–199 (PEAENEDRTA) shows a compositional bias: acidic residues.

This sequence belongs to the histone-like Alba family. As to quaternary structure, component of nuclear RNase P and RNase MRP ribonucleoproteins. RNase P consists of a catalytic RNA moiety and 10 different protein chains; POP1, POP4, POP5, POP7, RPP14, RPP21, RPP25, RPP30, RPP38 and RPP40. Within the RNase P complex, POP1, POP7 and RPP25 form the 'finger' subcomplex, POP5, RPP14, RPP40 and homodimeric RPP30 form the 'palm' subcomplex, and RPP21, POP4 and RPP38 form the 'wrist' subcomplex. All subunits of the RNase P complex interact with the catalytic RNA. Several subunits of RNase P are also part of the RNase MRP complex. RNase MRP consists of a catalytic RNA moiety and about 8 protein subunits; POP1, POP7, RPP25, RPP30, RPP38, RPP40 and possibly also POP4 and POP5. POP7 forms a heterodimer with RPP25 that binds to the P3 stem loop of the catalytic RNA.

It is found in the nucleus. Its subcellular location is the nucleolus. Component of ribonuclease P, a ribonucleoprotein complex that generates mature tRNA molecules by cleaving their 5'-ends. Also a component of the MRP ribonuclease complex, which cleaves pre-rRNA sequences. This Rattus norvegicus (Rat) protein is Ribonuclease P protein subunit p25 (Rpp25).